A 72-amino-acid chain; its full sequence is Large ribosomal subunit protein uL29 (72 aa).

It belongs to the universal ribosomal protein uL29 family.

This Microcystis aeruginosa (strain NIES-843 / IAM M-2473) protein is Large ribosomal subunit protein uL29.